A 104-amino-acid chain; its full sequence is Class I hydrophobin 4 (104 aa).

The N-terminal stretch at 1–16 is a signal peptide; it reads MFASTVFVSLLAVAAA. 4 cysteine pairs are disulfide-bonded: C26/C85, C34/C79, C35/C61, and C86/C99.

This sequence belongs to the fungal hydrophobin family. As to quaternary structure, self-assembles to form functional amyloid fibrils called rodlets. Self-assembly into fibrillar rodlets occurs spontaneously at hydrophobic:hydrophilic interfaces and the rodlets further associate laterally to form amphipathic monolayers.

It localises to the secreted. The protein resides in the cell wall. Its function is as follows. Aerial growth, conidiation, and dispersal of filamentous fungi in the environment rely upon a capability of their secreting small amphipathic proteins called hydrophobins (HPBs) with low sequence identity. Class I can self-assemble into an outermost layer of rodlet bundles on aerial cell surfaces, conferring cellular hydrophobicity that supports fungal growth, development and dispersal; whereas Class II form highly ordered films at water-air interfaces through intermolecular interactions but contribute nothing to the rodlet structure. HYD4 is a class I hydrophobin that negatively regulates aerial mycelial growth, conidiation, carotenoid and adenosine synthesis, resistance to oxidant stress, and fruiting body development. Seems not to be involved in the mycelial growth rate, the hydrophobicity of the mycelia and conidia, nor the conidial virulence on silkworm pupae. This chain is Class I hydrophobin 4, found in Cordyceps militaris (Caterpillar fungus).